Here is a 291-residue protein sequence, read N- to C-terminus: Oxidative stress-responsive serine-rich protein 1 (291 aa).

Positions 48 to 174 are disordered; the sequence is EDAKPKSACA…SSDAPQVSQA (127 aa). Residues 65–83 show a composition bias toward basic residues; the sequence is STRKSSRGAVRTQRRRRSK. The span at 132 to 142 shows a compositional bias: polar residues; it reads ECSSSLDTNHT. Residues Thr-142 and Thr-232 each carry the phosphothreonine modification.

In Bos taurus (Bovine), this protein is Oxidative stress-responsive serine-rich protein 1 (OSER1).